Here is a 112-residue protein sequence, read N- to C-terminus: DNA-binding protein Bv3F (112 aa).

The tract at residues 65–92 (KRNSKRMSTVPKYRDPATGKTWSGRGRQ) is disordered. 2 DNA-binding regions span residues 89–94 (RGRQPA) and 89–95 (RGRQPAW).

It belongs to the histone-like protein H-NS family. In terms of assembly, homodimer that oligomerizes on DNA into higher-order complexes that form bridges between disparate regions of DNA compacting it.

The protein resides in the cytoplasm. It is found in the nucleoid. Its function is as follows. A DNA-binding protein implicated in transcriptional repression and chromosome organization and compaction. Binds in the minor groove of AT-rich DNA. Binds nucleation sites in AT-rich DNA and bridges them, forming higher-order nucleoprotein complexes and condensing the chromosome. As many horizontally transferred genes are AT-rich, it plays a central role in silencing foreign genes. The sequence is that of DNA-binding protein Bv3F from Burkholderia vietnamiensis (strain G4 / LMG 22486) (Burkholderia cepacia (strain R1808)).